We begin with the raw amino-acid sequence, 419 residues long: Histidine--tRNA ligase (419 aa).

The protein belongs to the class-II aminoacyl-tRNA synthetase family. As to quaternary structure, homodimer.

The protein resides in the cytoplasm. The catalysed reaction is tRNA(His) + L-histidine + ATP = L-histidyl-tRNA(His) + AMP + diphosphate + H(+). The protein is Histidine--tRNA ligase of Thiobacillus denitrificans (strain ATCC 25259 / T1).